The primary structure comprises 718 residues: DNA ligase (718 aa).

NAD(+) contacts are provided by residues 34-38 (DAEYD), 83-84 (SL), and glutamate 115. The N6-AMP-lysine intermediate role is filled by lysine 117. Residues arginine 138, glutamate 186, lysine 302, and lysine 326 each contribute to the NAD(+) site. Residues cysteine 420, cysteine 423, cysteine 438, and cysteine 444 each coordinate Zn(2+). The BRCT domain occupies 604-694 (PKGDALAGKT…DRSAPAASNN (91 aa)).

Belongs to the NAD-dependent DNA ligase family. LigA subfamily. The cofactor is Mg(2+). Mn(2+) is required as a cofactor.

It catalyses the reaction NAD(+) + (deoxyribonucleotide)n-3'-hydroxyl + 5'-phospho-(deoxyribonucleotide)m = (deoxyribonucleotide)n+m + AMP + beta-nicotinamide D-nucleotide.. DNA ligase that catalyzes the formation of phosphodiester linkages between 5'-phosphoryl and 3'-hydroxyl groups in double-stranded DNA using NAD as a coenzyme and as the energy source for the reaction. It is essential for DNA replication and repair of damaged DNA. This chain is DNA ligase, found in Roseiflexus castenholzii (strain DSM 13941 / HLO8).